The primary structure comprises 334 residues: Cathepsin J (334 aa).

The first 17 residues, 1-17, serve as a signal peptide directing secretion; sequence MTPAVFLVILCFGVASG. Residues 18 to 113 constitute a propeptide, activation peptide; sequence APARDPNLDA…PSAQKQVSIG (96 aa). Residue Cys138 is part of the active site. 3 N-linked (GlcNAc...) asparagine glycosylation sites follow: Asn217, Asn221, and Asn268. An intrachain disulfide couples Cys269 to Cys322. Residue His276 is part of the active site. N-linked (GlcNAc...) asparagine glycosylation occurs at Asn288. Residue Asn300 is part of the active site.

Belongs to the peptidase C1 family. Expressed specifically in placenta.

It is found in the lysosome. In Rattus norvegicus (Rat), this protein is Cathepsin J (Ctsj).